We begin with the raw amino-acid sequence, 190 residues long: Cytoglobin (190 aa).

Residues 18–167 (ELSEAERKAV…IYSHVTAAYK (150 aa)) form the Globin domain. A disulfide bridge links Cys38 with Cys83. 2 residues coordinate heme b: His81 and His113.

It belongs to the globin family. In terms of assembly, monomeric. Homodimer; disulfide-linked in vitro. Also homooligomeric in vitro. Post-translationally, the formation of an intramolecular disulfide bond between cysteines Cys-38 and Cys-83 specifically enhances the nitrite reductase activity. In terms of tissue distribution, widely expressed. Highest expression in heart, stomach, bladder and small intestine.

Its subcellular location is the cytoplasm. It localises to the nucleus. The enzyme catalyses Fe(II)-heme b-[protein] + nitric oxide + O2 = Fe(III)-heme b-[protein] + nitrate. It carries out the reaction Fe(III)-heme b-[protein] + nitric oxide + H2O = Fe(II)-heme b-[protein] + nitrite + 2 H(+). It catalyses the reaction 2 superoxide + 2 H(+) = H2O2 + O2. The catalysed reaction is H2O2 + AH2 = A + 2 H2O. Its activity is regulated as follows. The nitric oxide dioxygenase activity is activated by a reducing system composed of cytochrome b5, its upstream reductase CYB5R3 and NADH. In terms of biological role, probable multifunctional globin with a hexacoordinated heme iron required for the catalysis of various reactions depending on redox condition of the cell as well as oxygen availability. Has a nitric oxide dioxygenase (NOD) activity and is most probably involved in cell-mediated and oxygen-dependent nitric oxide consumption. By scavenging this second messenger may regulate several biological processes including endothelium-mediated vasodilation and vascular tone. Under normoxic conditions functions as a nitric oxide dioxygenase (NOD) but under hypoxic conditions the globin may switch its function to that of a nitrite (NO2) reductase (NiR), generating nitric oxide. Could also have peroxidase and superoxide dismutase activities, detoxifying reactive oxygen species and protecting cells against oxidative stress. Also binds dioxygen with low affinity and could function as an oxygen sensor but has probably no function as a respiratory oxygen carrier. This Homo sapiens (Human) protein is Cytoglobin.